We begin with the raw amino-acid sequence, 205 residues long: Large ribosomal subunit protein bL25 (205 aa).

The disordered stretch occupies residues 184–205 (QPAGAVSEAAEGGEAAGETPAA). Residues 186–205 (AGAVSEAAEGGEAAGETPAA) show a composition bias toward low complexity.

It belongs to the bacterial ribosomal protein bL25 family. CTC subfamily. Part of the 50S ribosomal subunit; part of the 5S rRNA/L5/L18/L25 subcomplex. Contacts the 5S rRNA. Binds to the 5S rRNA independently of L5 and L18.

Its function is as follows. This is one of the proteins that binds to the 5S RNA in the ribosome where it forms part of the central protuberance. The chain is Large ribosomal subunit protein bL25 from Cupriavidus necator (strain ATCC 17699 / DSM 428 / KCTC 22496 / NCIMB 10442 / H16 / Stanier 337) (Ralstonia eutropha).